The sequence spans 244 residues: MSQLDLNALNELPKVDRVLALAEINAQLETLSAEERVAWALENLPGEYVLSSSFGIQAAVSLHLVNQIRPDIPVILTDTGYLFPETYQFIDELTDKLKLNLKVYRAGESPAWQEARYGKLWEQGVEGIEKYNDINKVEPMNRALKELKAQTWFAGLRREQSGSRAHLPVLATQRGVFKVLPIIDWDNRTVYQYLQKHGLKYHPLWDQGYLSVGDTHTTRKWEPGMAEEETRFFGLKRECGLHEG.

C239 functions as the Nucleophile; cysteine thiosulfonate intermediate in the catalytic mechanism.

Belongs to the PAPS reductase family. CysH subfamily.

The protein resides in the cytoplasm. It carries out the reaction [thioredoxin]-disulfide + sulfite + adenosine 3',5'-bisphosphate + 2 H(+) = [thioredoxin]-dithiol + 3'-phosphoadenylyl sulfate. It functions in the pathway sulfur metabolism; hydrogen sulfide biosynthesis; sulfite from sulfate: step 3/3. Catalyzes the formation of sulfite from phosphoadenosine 5'-phosphosulfate (PAPS) using thioredoxin as an electron donor. The protein is Phosphoadenosine 5'-phosphosulfate reductase of Salmonella choleraesuis (strain SC-B67).